An 89-amino-acid chain; its full sequence is Small ribosomal subunit protein uS14 (89 aa).

This sequence belongs to the universal ribosomal protein uS14 family. Part of the 30S ribosomal subunit. Contacts proteins S3 and S10.

Functionally, binds 16S rRNA, required for the assembly of 30S particles and may also be responsible for determining the conformation of the 16S rRNA at the A site. This is Small ribosomal subunit protein uS14 from Deinococcus radiodurans (strain ATCC 13939 / DSM 20539 / JCM 16871 / CCUG 27074 / LMG 4051 / NBRC 15346 / NCIMB 9279 / VKM B-1422 / R1).